A 178-amino-acid chain; its full sequence is Phosphopantetheine adenylyltransferase (178 aa).

Serine 8 is a substrate binding site. ATP is bound by residues 8–9 and histidine 16; that span reads SF. Residues lysine 40, threonine 72, and arginine 86 each coordinate substrate. ATP-binding positions include 87-89, glutamate 97, and 122-128; these read GLR and YSFLSSS.

Belongs to the bacterial CoaD family. In terms of assembly, homohexamer. It depends on Mg(2+) as a cofactor.

It localises to the cytoplasm. The catalysed reaction is (R)-4'-phosphopantetheine + ATP + H(+) = 3'-dephospho-CoA + diphosphate. The protein operates within cofactor biosynthesis; coenzyme A biosynthesis; CoA from (R)-pantothenate: step 4/5. In terms of biological role, reversibly transfers an adenylyl group from ATP to 4'-phosphopantetheine, yielding dephospho-CoA (dPCoA) and pyrophosphate. In Picosynechococcus sp. (strain ATCC 27264 / PCC 7002 / PR-6) (Agmenellum quadruplicatum), this protein is Phosphopantetheine adenylyltransferase.